Here is a 131-residue protein sequence, read N- to C-terminus: Leptin receptor overlapping transcript-like 1 (131 aa).

4 consecutive transmembrane segments (helical) span residues 7–27, 32–52, 69–89, and 100–120; these read LISL…GCAL, QYWP…YCIA, LAIF…VVFA, and ALVL…FLVF.

It belongs to the OB-RGRP/VPS55 family. Interacts with RAB13.

Its subcellular location is the membrane. Functionally, negatively regulates growth hormone (GH) receptor cell surface expression in liver. May play a role in liver resistance to GH during periods of reduced nutrient availability. The polypeptide is Leptin receptor overlapping transcript-like 1 (Leprotl1) (Rattus norvegicus (Rat)).